A 438-amino-acid chain; its full sequence is Aflatoxin cluster transcriptional coactivator aflS (438 aa).

The region spanning 65-134 (LALYNQLLAC…PSPGHVAHSV (70 aa)) is the HTH iclR-type domain. The segment at residues 95 to 114 (FEDVADIAGVPECRLRRLVR) is a DNA-binding region (H-T-H motif).

In terms of assembly, interacts with aflR.

The protein localises to the nucleus. In terms of biological role, transcription factor; part of the gene cluster that mediates the biosynthesis of aflatoxin, a polyketide-derived furanocoumarin which is part of the most toxic and carcinogenic compounds among the known mycotoxins. AflS exhibits no DNA-binding capability on its own, but forms a complex with the other aflatoxin cluster transcription factor aflR and acts as a modulator of aflR's DNA-binding by decreasing its DNA-binding affinity. The protein is Aflatoxin cluster transcriptional coactivator aflS of Aspergillus flavus (strain ATCC 200026 / FGSC A1120 / IAM 13836 / NRRL 3357 / JCM 12722 / SRRC 167).